Reading from the N-terminus, the 318-residue chain is Homeobox protein Nkx-2.5 (318 aa).

The homeobox DNA-binding region spans 137-196 (RRKPRVLFSQAQVYELERRFKQQRYLSPAERDQLASVLKLTSTQVKIWFQNRRYKCKRQR).

Belongs to the NK-2 homeobox family. Homodimer (via the homeobox); binds DNA as homodimer. Interacts (via the homeobox) with TBX5 (via the T-box); this complex binds DNA. Interacts with HIPK1 and HIPK2, but not HIPK3. Interacts with the C-terminal zinc finger of GATA4 through its homeobox domain. Also interacts with JARID2 which represses its ability to activate transcription of ANF. Interacts with FBLIM1. Interacts with TBX18. Interacts with histone methyltransferase NSD2 (via HMG box). Interacts with NEDD9. Interacts with TBX1.

Its subcellular location is the nucleus. Functionally, transcription factor required for the development of the heart and the spleen. During heart development, acts as a transcriptional activator of NPPA/ANF in cooperation with GATA4. May cooperate with TBX2 to negatively modulate expression of NPPA/ANF in the atrioventricular canal. Binds to the core DNA motif of NPPA promoter. Together with PBX1, required for spleen development through a mechanism that involves CDKN2B repression. Positively regulates transcription of genes such as COL3A1 and MMP2, resulting in increased pulmonary endothelial fibrosis in response to hypoxia. The polypeptide is Homeobox protein Nkx-2.5 (Nkx2-5) (Rattus norvegicus (Rat)).